The primary structure comprises 56 residues: Large ribosomal subunit protein bL32c (56 aa).

Belongs to the bacterial ribosomal protein bL32 family.

The protein resides in the plastid. Its subcellular location is the chloroplast. The protein is Large ribosomal subunit protein bL32c of Huperzia lucidula (Shining clubmoss).